Here is a 432-residue protein sequence, read N- to C-terminus: Peptidase B (432 aa).

Residues K196 and D201 each coordinate Mn(2+). K208 is an active-site residue. D219, D278, and E280 together coordinate Mn(2+). Residue R282 is part of the active site.

This sequence belongs to the peptidase M17 family. As to quaternary structure, homohexamer. Mn(2+) serves as cofactor.

The protein resides in the cytoplasm. The enzyme catalyses Release of an N-terminal amino acid, Xaa, from a peptide or arylamide. Xaa is preferably Glu or Asp but may be other amino acids, including Leu, Met, His, Cys and Gln.. In terms of biological role, probably plays an important role in intracellular peptide degradation. This Vibrio parahaemolyticus serotype O3:K6 (strain RIMD 2210633) protein is Peptidase B.